Reading from the N-terminus, the 799-residue chain is Protein translocase subunit SecA (799 aa).

Residues glutamine 85, 103–107 (GEGKT), and aspartate 504 each bind ATP.

Belongs to the SecA family. As to quaternary structure, monomer and homodimer. Part of the essential Sec protein translocation apparatus which comprises SecA, SecYEG and auxiliary proteins SecDF. Other proteins may also be involved.

The protein localises to the cell membrane. It localises to the cytoplasm. The enzyme catalyses ATP + H2O + cellular proteinSide 1 = ADP + phosphate + cellular proteinSide 2.. Part of the Sec protein translocase complex. Interacts with the SecYEG preprotein conducting channel. Has a central role in coupling the hydrolysis of ATP to the transfer of proteins into and across the cell membrane, serving as an ATP-driven molecular motor driving the stepwise translocation of polypeptide chains across the membrane. The sequence is that of Protein translocase subunit SecA from Lactobacillus gasseri (strain ATCC 33323 / DSM 20243 / BCRC 14619 / CIP 102991 / JCM 1131 / KCTC 3163 / NCIMB 11718 / NCTC 13722 / AM63).